Here is a 512-residue protein sequence, read N- to C-terminus: Putative aldehyde-dehydrogenase-like protein y4uC (512 aa).

The interval 14–41 (MKPERGRRSPLPRRPTRPPDERSSGIGN) is disordered. 266–271 (GGFATG) contacts NADP(+). Residues E286 and C320 contribute to the active site.

It belongs to the aldehyde dehydrogenase family.

Its pathway is amino-acid degradation; 4-aminobutanoate degradation. In terms of biological role, could be a succinate-semialdehyde dehydrogenase (NADP(+)). This is Putative aldehyde-dehydrogenase-like protein y4uC from Sinorhizobium fredii (strain NBRC 101917 / NGR234).